The primary structure comprises 1090 residues: Aminopeptidase-like protein AC3.5 (1090 aa).

At 1–77 (MEDVDLGKDR…KPKKRIACSP (77 aa)) the chain is on the cytoplasmic side. Low complexity predominate over residues 21 to 33 (GNGSASNLNNRNN). A disordered region spans residues 21-71 (GNGSASNLNNRNNIPLSEKAAKEPLQTQPQEAPPAPKPKVQKQKPPVKPKK). Residues 59 to 71 (KVQKQKPPVKPKK) are compositionally biased toward basic residues. A helical; Signal-anchor for type II membrane protein transmembrane segment spans residues 78 to 98 (GSAICLFLLAVAAIIFAAFLG). Topologically, residues 99 to 1090 (HYLTKQNYEM…DEMESSEEQE (992 aa)) are lumenal. N-linked (GlcNAc...) asparagine glycosylation is found at N115, N123, N143, N176, and N230. The disordered stretch occupies residues 217–259 (VTKRAKKSVDSGTNSTSEMPEGSGEEAMATTATTTTTESTTPV). Low complexity predominate over residues 241-257 (EEAMATTATTTTTESTT). 8 N-linked (GlcNAc...) asparagine glycosylation sites follow: N402, N710, N723, N789, N894, N919, N964, and N993. Residues 1069-1080 (YLDGKMKGPAKD) show a composition bias toward basic and acidic residues. Residues 1069-1090 (YLDGKMKGPAKDDEMESSEEQE) form a disordered region. A compositionally biased stretch (acidic residues) spans 1081-1090 (DEMESSEEQE).

Belongs to the peptidase M1 family.

It is found in the membrane. The protein is Aminopeptidase-like protein AC3.5 of Caenorhabditis elegans.